Here is a 184-residue protein sequence, read N- to C-terminus: Photosystem I assembly protein Ycf4 (184 aa).

Transmembrane regions (helical) follow at residues 22-42 (FCWA…GTSS) and 57-77 (IIFF…LFIS).

It belongs to the Ycf4 family.

Its subcellular location is the plastid. The protein resides in the chloroplast thylakoid membrane. Functionally, seems to be required for the assembly of the photosystem I complex. This chain is Photosystem I assembly protein Ycf4, found in Lepidium virginicum (Virginia pepperweed).